Here is a 620-residue protein sequence, read N- to C-terminus: Ran-binding protein 10 (620 aa).

Positions 1-34 (MAAATADPGAGSPQVGDSSGGATGCGLPSPGEQE) are disordered. The residue at position 2 (Ala2) is an N-acetylalanine. The B30.2/SPRY domain occupies 35–222 (LSRRLQRLYP…VDANFGQQPF (188 aa)). One can recognise a LisH domain in the interval 253-285 (WQAVLQNMVSSYLVHHGYCATATAFARMTETPI). One can recognise a CTLH domain in the interval 291-348 (SIKNRQKIQKLVLEGRVGEAIETTQRFYPGLLEHNPNLLFMLKCRQFVEMVNGTDSEV). The span at 347-398 (EVRSLSSRSPKSQDSYPGSPSLSPRHGPTSSHTHNTGADSPSCSNGVASTKS) shows a compositional bias: polar residues. A disordered region spans residues 347-459 (EVRSLSSRSP…TSDSEMEMEA (113 aa)). Ser361 is modified (phosphoserine). Tyr362 is modified (phosphotyrosine). Ser365, Ser367, Ser369, and Ser422 each carry phosphoserine. Over residues 409 to 436 (SSSSSSSSSSSSSSPSSVNYSESNSTDS) the composition is skewed to low complexity. The segment covering 437–450 (TKSQPHSSTSNQET) has biased composition (polar residues). Ser451 and Ser453 each carry phosphoserine.

The protein belongs to the RANBP9/10 family. As to quaternary structure, may form homodimers. Identified in the CTLH complex that contains GID4, RANBP9 and/or RANBP10, MKLN1, MAEA, RMND5A (or alternatively its paralog RMND5B), GID8, ARMC8, WDR26 and YPEL5. Within this complex, MAEA, RMND5A (or alternatively its paralog RMND5B), GID8, WDR26, and RANBP9 and/or RANBP10 form the catalytic core, while GID4, MKLN1, ARMC8 and YPEL5 have ancillary roles. Interacts with RAN and RANBP9. Interacts with the HGF receptor MET. Interacts with AR. Interacts with TUBB1. Interacts with YPEL5. May interact with TUBB5. Interacts with DDX4.

Its subcellular location is the cytoplasm. It localises to the cytosol. The protein localises to the nucleus. Functionally, may act as an adapter protein to couple membrane receptors to intracellular signaling pathways. Core component of the CTLH E3 ubiquitin-protein ligase complex that selectively accepts ubiquitin from UBE2H and mediates ubiquitination and subsequent proteasomal degradation of the transcription factor HBP1. Enhances dihydrotestosterone-induced transactivation activity of AR, as well as dexamethasone-induced transactivation activity of NR3C1, but does not affect estrogen-induced transactivation. Acts as a guanine nucleotide exchange factor (GEF) for RAN GTPase. May play an essential role in hemostasis and in maintaining microtubule dynamics with respect to both platelet shape and function. In Bos taurus (Bovine), this protein is Ran-binding protein 10 (RANBP10).